We begin with the raw amino-acid sequence, 208 residues long: ATP phosphoribosyltransferase (208 aa).

This sequence belongs to the ATP phosphoribosyltransferase family. Short subfamily. In terms of assembly, heteromultimer composed of HisG and HisZ subunits.

The protein localises to the cytoplasm. It catalyses the reaction 1-(5-phospho-beta-D-ribosyl)-ATP + diphosphate = 5-phospho-alpha-D-ribose 1-diphosphate + ATP. The protein operates within amino-acid biosynthesis; L-histidine biosynthesis; L-histidine from 5-phospho-alpha-D-ribose 1-diphosphate: step 1/9. Its function is as follows. Catalyzes the condensation of ATP and 5-phosphoribose 1-diphosphate to form N'-(5'-phosphoribosyl)-ATP (PR-ATP). Has a crucial role in the pathway because the rate of histidine biosynthesis seems to be controlled primarily by regulation of HisG enzymatic activity. This Lactococcus lactis subsp. cremoris (strain MG1363) protein is ATP phosphoribosyltransferase.